A 513-amino-acid chain; its full sequence is Na(+)/H(+) antiporter NhaB (513 aa).

Transmembrane regions (helical) follow at residues 23-43 (LALI…PFVA), 52-72 (IFTL…LLAI), 97-117 (LLLM…LFIF), 120-140 (LLLS…AAAF), 144-164 (FLDA…FYGI), 202-222 (LMMH…VGEP), 238-258 (FFLR…LTCL), 303-323 (AIIG…VGLI), 348-368 (TESL…AVII), 391-411 (LFYI…VGTI), 447-467 (ATPN…APLI), and 475-495 (VWMA…CVEF).

Belongs to the NhaB Na(+)/H(+) (TC 2.A.34) antiporter family.

Its subcellular location is the cell inner membrane. The enzyme catalyses 2 Na(+)(in) + 3 H(+)(out) = 2 Na(+)(out) + 3 H(+)(in). Its function is as follows. Na(+)/H(+) antiporter that extrudes sodium in exchange for external protons. The chain is Na(+)/H(+) antiporter NhaB from Shigella boydii serotype 18 (strain CDC 3083-94 / BS512).